Consider the following 676-residue polypeptide: Multisubstrate pseudouridine synthase 7 (676 aa).

Disordered stretches follow at residues 1-27 (MSDSSEATVKRPLDAHVGPSENAAKKL) and 87-110 (KMPKKPQRSKEEVNAEKESEAARR). Ser-2 is subject to N-acetylserine. Basic and acidic residues predominate over residues 94–110 (RSKEEVNAEKESEAARR). Catalysis depends on Asp-256, which acts as the Nucleophile. Residues 338-582 (GFINYFGMQR…AGSYRTVIQK (245 aa)) form the TRUD domain.

Belongs to the pseudouridine synthase TruD family.

It localises to the nucleus. It is found in the cytoplasm. The enzyme catalyses uridine in 5S rRNA = pseudouridine in 5S rRNA. The catalysed reaction is uridine in snRNA = pseudouridine in snRNA. It carries out the reaction uridine(13) in tRNA = pseudouridine(13) in tRNA. It catalyses the reaction a uridine in mRNA = a pseudouridine in mRNA. Its function is as follows. Catalyzes pseudouridylation at position 35 in U2 snRNA stem-loop II region which induces particular conformation of the mRNA-U2 snRNA duplex and places the nucleophile in an accessible position for the first step of splicing. Also catalyzes pseudouridylation at position 56 in U2 snRNA. Also catalyzes pseudouridylation at position 50 in 5S rRNA, position 13 in cytoplasmic tRNAs, and position 35 in pre-tRNA(Tyr). Pseudouridine residues in tRNAs may stabilize the local RNA conformation, favor interactions with protein partners and play an important role in the stabilization of the codon-anticodon interaction with mRNA. Also catalyzes pseudouridylation of mRNAs in response to heat shock: mediates pseudouridylation of mRNAs with the consensus sequence 5'-UGUAR-3'. In Saccharomyces cerevisiae (strain ATCC 204508 / S288c) (Baker's yeast), this protein is Multisubstrate pseudouridine synthase 7.